Consider the following 193-residue polypeptide: Cell wall galactomannoprotein (193 aa).

The signal sequence occupies residues 1–17; that stretch reads MFFRILALLPLVFLVTA. Asn-38 and Asn-173 each carry an N-linked (GlcNAc...) asparagine glycan.

Belongs to the cell wall mannoprotein 1 family. Galactomannoprotein, glycosylated.

The protein resides in the secreted. It localises to the cell wall. Functionally, constitutive protein of the cell wall. The chain is Cell wall galactomannoprotein from Armillaria ostoyae (Armillaria root rot fungus).